The primary structure comprises 161 residues: Lipoprotein signal peptidase (161 aa).

A run of 3 helical transmembrane segments spans residues 9–29 (ISLLMTIIVLVFDQVSKWLIT), 63–83 (KMLFFYIITIIILIVLVIFYI), and 88–108 (FNLFMQVAISLLFAGALGNFI). Catalysis depends on residues aspartate 118 and aspartate 136. A helical transmembrane segment spans residues 131–151 (IFNIADSSLTIGVIFVIIALI).

This sequence belongs to the peptidase A8 family.

Its subcellular location is the cell membrane. It carries out the reaction Release of signal peptides from bacterial membrane prolipoproteins. Hydrolyzes -Xaa-Yaa-Zaa-|-(S,diacylglyceryl)Cys-, in which Xaa is hydrophobic (preferably Leu), and Yaa (Ala or Ser) and Zaa (Gly or Ala) have small, neutral side chains.. It participates in protein modification; lipoprotein biosynthesis (signal peptide cleavage). This protein specifically catalyzes the removal of signal peptides from prolipoproteins. This Staphylococcus epidermidis (strain ATCC 12228 / FDA PCI 1200) protein is Lipoprotein signal peptidase.